Here is a 196-residue protein sequence, read N- to C-terminus: GTP cyclohydrolase 1 (196 aa).

The Zn(2+) site is built by Cys-86, His-89, and Cys-157.

Belongs to the GTP cyclohydrolase I family. In terms of assembly, toroid-shaped homodecamer, composed of two pentamers of five dimers.

It carries out the reaction GTP + H2O = 7,8-dihydroneopterin 3'-triphosphate + formate + H(+). It participates in cofactor biosynthesis; 7,8-dihydroneopterin triphosphate biosynthesis; 7,8-dihydroneopterin triphosphate from GTP: step 1/1. The polypeptide is GTP cyclohydrolase 1 (Parabacteroides distasonis (strain ATCC 8503 / DSM 20701 / CIP 104284 / JCM 5825 / NCTC 11152)).